The chain runs to 163 residues: Phosphopantetheine adenylyltransferase (163 aa).

Position 11 (S11) interacts with substrate. Residues 11-12 (SF) and H19 each bind ATP. Substrate-binding residues include K43, A76, and R90. ATP-binding positions include 91 to 93 (GLR), E101, and 126 to 132 (WQALSSS).

Belongs to the bacterial CoaD family. Homohexamer. Mg(2+) serves as cofactor.

The protein localises to the cytoplasm. It carries out the reaction (R)-4'-phosphopantetheine + ATP + H(+) = 3'-dephospho-CoA + diphosphate. It functions in the pathway cofactor biosynthesis; coenzyme A biosynthesis; CoA from (R)-pantothenate: step 4/5. Its function is as follows. Reversibly transfers an adenylyl group from ATP to 4'-phosphopantetheine, yielding dephospho-CoA (dPCoA) and pyrophosphate. The protein is Phosphopantetheine adenylyltransferase of Streptococcus pyogenes serotype M6 (strain ATCC BAA-946 / MGAS10394).